Consider the following 303-residue polypeptide: N-acetyl-D-glucosamine kinase (303 aa).

Residues 4 to 11 (GFDIGGTK) and 133 to 140 (GVGGGLVL) contribute to the ATP site. Residues H157, C177, C179, and C184 each contribute to the Zn(2+) site.

This sequence belongs to the ROK (NagC/XylR) family. NagK subfamily.

It carries out the reaction N-acetyl-D-glucosamine + ATP = N-acetyl-D-glucosamine 6-phosphate + ADP + H(+). It participates in cell wall biogenesis; peptidoglycan recycling. Its function is as follows. Catalyzes the phosphorylation of N-acetyl-D-glucosamine (GlcNAc) derived from cell-wall degradation, yielding GlcNAc-6-P. This chain is N-acetyl-D-glucosamine kinase, found in Salmonella paratyphi A (strain ATCC 9150 / SARB42).